A 335-amino-acid chain; its full sequence is Mesoderm-specific transcript protein (335 aa).

Transmembrane regions (helical) follow at residues 13-33 and 63-83; these read WWVQVGLLAVPLLAAYLHIPP and VGVVGSPEIVVLLHGFPTSSY. The AB hydrolase-1 domain maps to 71–310; it reads IVVLLHGFPT…PRSTVSILDD (240 aa). The short motif at 98–103 is the RVIALD element; sequence RVIALD. A glycan (N-linked (GlcNAc...) asparagine) is linked at N163. The chain crosses the membrane as a helical span at residues 266-286; it reads VGALASVSIPIHFIYGPLDPI.

The protein belongs to the AB hydrolase superfamily. Expressed in mesodermal tissues. Isoform 1 is exclusively expressed from the paternal allele in all fetal tissues and cell lines examined, whereas isoform 2 is preferentially expressed from the paternal allele in a tissue-type-specific manner.

It localises to the endoplasmic reticulum membrane. The polypeptide is Mesoderm-specific transcript protein (Mest) (Mus musculus (Mouse)).